Consider the following 192-residue polypeptide: dITP/XTP pyrophosphatase (192 aa).

Residue 7 to 12 (SNNKNK) coordinates substrate. Aspartate 68 serves as the catalytic Proton acceptor. Aspartate 68 serves as a coordination point for Mg(2+). Residues threonine 69, 148-151 (FGYD), lysine 171, and 176-177 (HR) each bind substrate.

It belongs to the HAM1 NTPase family. In terms of assembly, homodimer. Mg(2+) serves as cofactor.

The enzyme catalyses XTP + H2O = XMP + diphosphate + H(+). The catalysed reaction is dITP + H2O = dIMP + diphosphate + H(+). It carries out the reaction ITP + H2O = IMP + diphosphate + H(+). Its function is as follows. Pyrophosphatase that catalyzes the hydrolysis of nucleoside triphosphates to their monophosphate derivatives, with a high preference for the non-canonical purine nucleotides XTP (xanthosine triphosphate), dITP (deoxyinosine triphosphate) and ITP. Seems to function as a house-cleaning enzyme that removes non-canonical purine nucleotides from the nucleotide pool, thus preventing their incorporation into DNA/RNA and avoiding chromosomal lesions. The sequence is that of dITP/XTP pyrophosphatase from Flavobacterium johnsoniae (strain ATCC 17061 / DSM 2064 / JCM 8514 / BCRC 14874 / CCUG 350202 / NBRC 14942 / NCIMB 11054 / UW101) (Cytophaga johnsonae).